The following is a 427-amino-acid chain: Glutamyl-tRNA reductase (427 aa).

Substrate is bound by residues 49 to 52 (TCNR), Ser101, 106 to 108 (EPQ), and Gln112. Residue Cys50 is the Nucleophile of the active site. 181–186 (GAGETI) lines the NADP(+) pocket. The disordered stretch occupies residues 407–427 (FPATPGYRHPPVRPDDADPAP). The segment covering 418 to 427 (VRPDDADPAP) has biased composition (basic and acidic residues).

It belongs to the glutamyl-tRNA reductase family. In terms of assembly, homodimer.

The enzyme catalyses (S)-4-amino-5-oxopentanoate + tRNA(Glu) + NADP(+) = L-glutamyl-tRNA(Glu) + NADPH + H(+). Its pathway is porphyrin-containing compound metabolism; protoporphyrin-IX biosynthesis; 5-aminolevulinate from L-glutamyl-tRNA(Glu): step 1/2. In terms of biological role, catalyzes the NADPH-dependent reduction of glutamyl-tRNA(Glu) to glutamate 1-semialdehyde (GSA). The chain is Glutamyl-tRNA reductase from Stenotrophomonas maltophilia (strain K279a).